The following is a 359-amino-acid chain: Popy class I histocompatibility antigen, alpha chain E (359 aa).

Residues 1–18 form the signal peptide; it reads GTLLLLLSEALALTETWA. Positions 19 to 108 are alpha-1; the sequence is GSHSLKYFHT…LRGYYNQTEA (90 aa). The Extracellular segment spans residues 19–302; the sequence is GSHSLKYFHT…EPASQTTIPI (284 aa). An N-linked (GlcNAc...) asparagine glycan is attached at N104. The segment at 109-200 is alpha-2; the sequence is GSHTLQWMHG…EKGKETLLHL (92 aa). 2 cysteine pairs are disulfide-bonded: C119–C182 and C221–C277. The alpha-3 stretch occupies residues 201 to 292; the sequence is DPPKTHVTHH…GLPEPLTLRW (92 aa). An Ig-like C1-type domain is found at 203 to 291; the sequence is PKTHVTHHRI…EGLPEPLTLR (89 aa). The tract at residues 293–302 is connecting peptide; the sequence is EPASQTTIPI. A helical transmembrane segment spans residues 303–326; sequence VGIFAGLVLLGAVVTGATVVAAVM. Over 327–359 the chain is Cytoplasmic; the sequence is WRKKSSGGKGGSYSKAEWSDSAQGSESLTACKA. Residues 330-359 are disordered; it reads KSSGGKGGSYSKAEWSDSAQGSESLTACKA. Over residues 346–359 the composition is skewed to polar residues; that stretch reads DSAQGSESLTACKA. At S351 the chain carries Phosphoserine.

The protein belongs to the MHC class I family. Heterodimer of an alpha chain and a beta chain (beta-2-microglobulin).

It is found in the membrane. Functionally, involved in the presentation of foreign antigens to the immune system. The sequence is that of Popy class I histocompatibility antigen, alpha chain E (Popy-E) from Pongo pygmaeus (Bornean orangutan).